Consider the following 111-residue polypeptide: Large ribosomal subunit protein eL33z (111 aa).

It belongs to the eukaryotic ribosomal protein eL33 family.

The protein is Large ribosomal subunit protein eL33z (RPL35AB) of Arabidopsis thaliana (Mouse-ear cress).